A 574-amino-acid chain; its full sequence is M-phase inducer phosphatase 2 (574 aa).

Disordered stretches follow at residues 31-51 (GFGFGSDGLLGSPERAASSSP) and 90-110 (RRTSECSLSSESSESSDAGLC). Ser-42 carries the post-translational modification Phosphoserine. Over residues 90 to 105 (RRTSECSLSSESSESS) the composition is skewed to low complexity. A Phosphoserine; by MELK modification is found at Ser-166. Ser-246 carries the post-translational modification Phosphoserine. A Phosphoserine; by MAPKAPK2 and MELK modification is found at Ser-319. At Ser-319 the chain carries Phosphoserine; by MELK and MAPK14. Residues 339–359 (DVPVLSKRRKSGTPLEEQQLE) form a disordered region. Residue Ser-349 is modified to Phosphoserine; by AURKA. Ser-370 carries the post-translational modification Phosphoserine; by BRSK1 and MAPK14. Positions 425–532 (IVEKFVIVDC…FFPQHPNFCE (108 aa)) constitute a Rhodanese domain. Residue Cys-481 is part of the active site. Ser-557 carries the post-translational modification Phosphoserine.

Belongs to the MPI phosphatase family. Interacts with MAPK14 and 14-3-3 proteins. Phosphorylated by BRSK1 in vitro. Phosphorylated by CHEK1, which inhibits the activity of this protein. Phosphorylation at Ser-349 by AURKA might locally participate in the control of the onset of mitosis. Phosphorylation by MELK at Ser-166 promotes localization to the centrosome and the spindle poles during mitosis. Phosphorylation at Ser-319 and Ser-370 by MAPK14 is required for binding to 14-3-3 proteins.

The protein resides in the cytoplasm. The protein localises to the cytoskeleton. Its subcellular location is the microtubule organizing center. It is found in the centrosome. It localises to the spindle pole. The enzyme catalyses O-phospho-L-tyrosyl-[protein] + H2O = L-tyrosyl-[protein] + phosphate. Its activity is regulated as follows. Stimulated by B-type cyclins. Functionally, tyrosine protein phosphatase which functions as a dosage-dependent inducer of mitotic progression. Directly dephosphorylates CDK1 and stimulates its kinase activity. Required for G2/M phases of the cell cycle progression and abscission during cytokinesis in a ECT2-dependent manner. The three isoforms seem to have a different level of activity. The polypeptide is M-phase inducer phosphatase 2 (Cdc25b) (Rattus norvegicus (Rat)).